A 958-amino-acid chain; its full sequence is Isoleucine--tRNA ligase (958 aa).

The segment at 1–32 is disordered; that stretch reads MSDNQNKPGKPAAKPQSKYPVNMTDTPFPMRG. Positions 71–81 match the 'HIGH' region motif; sequence PYANGDIHLGH. Residue Glu-590 participates in L-isoleucyl-5'-AMP binding. The 'KMSKS' region signature appears at 631 to 635; that stretch reads KMSKS. Position 634 (Lys-634) interacts with ATP. Zn(2+) is bound by residues Cys-921, Cys-924, Cys-941, and Cys-944.

The protein belongs to the class-I aminoacyl-tRNA synthetase family. IleS type 1 subfamily. In terms of assembly, monomer. Zn(2+) serves as cofactor.

The protein resides in the cytoplasm. It carries out the reaction tRNA(Ile) + L-isoleucine + ATP = L-isoleucyl-tRNA(Ile) + AMP + diphosphate. Catalyzes the attachment of isoleucine to tRNA(Ile). As IleRS can inadvertently accommodate and process structurally similar amino acids such as valine, to avoid such errors it has two additional distinct tRNA(Ile)-dependent editing activities. One activity is designated as 'pretransfer' editing and involves the hydrolysis of activated Val-AMP. The other activity is designated 'posttransfer' editing and involves deacylation of mischarged Val-tRNA(Ile). The sequence is that of Isoleucine--tRNA ligase from Janthinobacterium sp. (strain Marseille) (Minibacterium massiliensis).